The following is a 159-amino-acid chain: 2-C-methyl-D-erythritol 2,4-cyclodiphosphate synthase (159 aa).

A divalent metal cation-binding residues include Asp-10 and His-12. Residues 10 to 12 (DVH) and 36 to 37 (HS) each bind 4-CDP-2-C-methyl-D-erythritol 2-phosphate. His-44 provides a ligand contact to a divalent metal cation. Residues 58-60 (DIG), 134-137 (TTSE), Phe-141, and Arg-144 contribute to the 4-CDP-2-C-methyl-D-erythritol 2-phosphate site.

The protein belongs to the IspF family. In terms of assembly, homotrimer. A divalent metal cation serves as cofactor.

It catalyses the reaction 4-CDP-2-C-methyl-D-erythritol 2-phosphate = 2-C-methyl-D-erythritol 2,4-cyclic diphosphate + CMP. It participates in isoprenoid biosynthesis; isopentenyl diphosphate biosynthesis via DXP pathway; isopentenyl diphosphate from 1-deoxy-D-xylulose 5-phosphate: step 4/6. Involved in the biosynthesis of isopentenyl diphosphate (IPP) and dimethylallyl diphosphate (DMAPP), two major building blocks of isoprenoid compounds. Catalyzes the conversion of 4-diphosphocytidyl-2-C-methyl-D-erythritol 2-phosphate (CDP-ME2P) to 2-C-methyl-D-erythritol 2,4-cyclodiphosphate (ME-CPP) with a corresponding release of cytidine 5-monophosphate (CMP). The sequence is that of 2-C-methyl-D-erythritol 2,4-cyclodiphosphate synthase from Cereibacter sphaeroides (strain ATCC 17029 / ATH 2.4.9) (Rhodobacter sphaeroides).